Reading from the N-terminus, the 199-residue chain is Molybdenum cofactor guanylyltransferase (199 aa).

GTP contacts are provided by residues 12-14 (LAG), lysine 25, asparagine 53, aspartate 71, and aspartate 101. Residue aspartate 101 participates in Mg(2+) binding.

Belongs to the MobA family. As to quaternary structure, monomer. Requires Mg(2+) as cofactor.

The protein localises to the cytoplasm. The enzyme catalyses Mo-molybdopterin + GTP + H(+) = Mo-molybdopterin guanine dinucleotide + diphosphate. In terms of biological role, transfers a GMP moiety from GTP to Mo-molybdopterin (Mo-MPT) cofactor (Moco or molybdenum cofactor) to form Mo-molybdopterin guanine dinucleotide (Mo-MGD) cofactor. The protein is Molybdenum cofactor guanylyltransferase of Cupriavidus taiwanensis (strain DSM 17343 / BCRC 17206 / CCUG 44338 / CIP 107171 / LMG 19424 / R1) (Ralstonia taiwanensis (strain LMG 19424)).